The following is a 575-amino-acid chain: Probable methionine--tRNA ligase, mitochondrial (575 aa).

Positions 52–62 match the 'HIGH' region motif; sequence FYVNGPPHIGH. Positions 352-356 match the 'KMSKS' region motif; that stretch reads KMSKS. K355 lines the ATP pocket.

This sequence belongs to the class-I aminoacyl-tRNA synthetase family.

The protein localises to the mitochondrion matrix. The enzyme catalyses tRNA(Met) + L-methionine + ATP = L-methionyl-tRNA(Met) + AMP + diphosphate. In Dictyostelium discoideum (Social amoeba), this protein is Probable methionine--tRNA ligase, mitochondrial (mmetS).